A 302-amino-acid polypeptide reads, in one-letter code: ATP synthase subunit a (302 aa).

7 helical membrane passes run 61–81 (VDSL…FWLG), 119–139 (IAPL…MDLI), 148–168 (FEWV…FKIV), 172–192 (DPNI…FLTI), 214–234 (PVVK…ALLA), 252–272 (FVFI…AWPW), and 273–293 (AVFH…LTIV).

The protein belongs to the ATPase A chain family. As to quaternary structure, F-type ATPases have 2 components, CF(1) - the catalytic core - and CF(0) - the membrane proton channel. CF(1) has five subunits: alpha(3), beta(3), gamma(1), delta(1), epsilon(1). CF(0) has three main subunits: a(1), b(2) and c(9-12). The alpha and beta chains form an alternating ring which encloses part of the gamma chain. CF(1) is attached to CF(0) by a central stalk formed by the gamma and epsilon chains, while a peripheral stalk is formed by the delta and b chains.

It is found in the cell inner membrane. Functionally, key component of the proton channel; it plays a direct role in the translocation of protons across the membrane. This chain is ATP synthase subunit a, found in Alcanivorax borkumensis (strain ATCC 700651 / DSM 11573 / NCIMB 13689 / SK2).